Consider the following 443-residue polypeptide: F-box only protein 39 (443 aa).

The F-box domain occupies 13-59 (QSCWATLPDVCLRRVFWWLGDRDRSRAALVCRKWNQIMYSADLWRYR).

Directly interacts with SKP1 and CUL1.

In terms of biological role, substrate-recognition component of the SCF (SKP1-CUL1-F-box protein)-type E3 ubiquitin ligase complex. The polypeptide is F-box only protein 39 (Fbxo39) (Rattus norvegicus (Rat)).